Consider the following 333-residue polypeptide: Flotillin-like protein FloA (333 aa).

2 helical membrane-spanning segments follow: residues 8–28 (LMPIILLALALILISVVFTFI) and 30–50 (VGLWISALAAGVNVGIFTLVG).

Belongs to the flotillin-like FloA family. Homooligomerizes.

The protein resides in the cell membrane. It is found in the membrane raft. Found in functional membrane microdomains (FMM) that may be equivalent to eukaryotic membrane rafts. FMMs are highly dynamic and increase in number as cells age. Flotillins are thought to be important factors in membrane fluidity. This chain is Flotillin-like protein FloA, found in Desulfitobacterium hafniense (strain DSM 10664 / DCB-2).